Consider the following 104-residue polypeptide: Growth-regulated protein homolog alpha (104 aa).

The N-terminal stretch at 1–30 (MAPAATAAAPRLLRAAMLFLLLVAAGRRAA) is a signal peptide. Cystine bridges form between Cys-40–Cys-66 and Cys-42–Cys-82.

Belongs to the intercrine alpha (chemokine CxC) family.

The protein localises to the secreted. This chain is Growth-regulated protein homolog alpha, found in Bos taurus (Bovine).